The chain runs to 87 residues: Large ribosomal subunit protein bL27 (87 aa).

Residues 1-21 form a disordered region; it reads MAHKKAGGSSRNGRDSESKRL.

It belongs to the bacterial ribosomal protein bL27 family.

This chain is Large ribosomal subunit protein bL27, found in Burkholderia multivorans (strain ATCC 17616 / 249).